The following is a 142-amino-acid chain: Large ribosomal subunit protein uL13 (142 aa).

The protein belongs to the universal ribosomal protein uL13 family. In terms of assembly, part of the 50S ribosomal subunit.

In terms of biological role, this protein is one of the early assembly proteins of the 50S ribosomal subunit, although it is not seen to bind rRNA by itself. It is important during the early stages of 50S assembly. The sequence is that of Large ribosomal subunit protein uL13 from Janthinobacterium sp. (strain Marseille) (Minibacterium massiliensis).